Here is a 31-residue protein sequence, read N- to C-terminus: Superoxide dismutase [Cu-Zn] (31 aa).

The protein belongs to the Cu-Zn superoxide dismutase family. The cofactor is Cu cation. Zn(2+) serves as cofactor.

It localises to the cytoplasm. The enzyme catalyses 2 superoxide + 2 H(+) = H2O2 + O2. Destroys radicals which are normally produced within the cells and which are toxic to biological systems. This is Superoxide dismutase [Cu-Zn] from Striga hermonthica (Purple witchweed).